A 189-amino-acid polypeptide reads, in one-letter code: GMP synthase [glutamine-hydrolyzing] subunit A (189 aa).

In terms of domain architecture, Glutamine amidotransferase type-1 spans 1–189 (MIVILNNGGQ…CKKCGFEFEE (189 aa)). Cysteine 76 serves as the catalytic Nucleophile. Catalysis depends on residues histidine 163 and glutamate 165.

As to quaternary structure, heterodimer composed of a glutamine amidotransferase subunit (A) and a GMP-binding subunit (B).

It catalyses the reaction XMP + L-glutamine + ATP + H2O = GMP + L-glutamate + AMP + diphosphate + 2 H(+). Its pathway is purine metabolism; GMP biosynthesis; GMP from XMP (L-Gln route): step 1/1. Its function is as follows. Catalyzes the synthesis of GMP from XMP. The sequence is that of GMP synthase [glutamine-hydrolyzing] subunit A from Methanococcus maripaludis (strain C7 / ATCC BAA-1331).